Consider the following 169-residue polypeptide: Major fimbrial subunit SMF-1 (169 aa).

A signal peptide spans 1 to 11; the sequence is MLAAAPLAANA.

It belongs to the fimbrial protein family.

The protein localises to the fimbrium. In terms of biological role, involved in adherence to eukaryotic epithelial cells and abiotic surfaces. Mediates agglutination of animal red blood cells. This Stenotrophomonas maltophilia (strain K279a) protein is Major fimbrial subunit SMF-1.